A 223-amino-acid chain; its full sequence is Kinetochore protein Spc25 (223 aa).

A coiled-coil region spans residues 65–115 (LRCGELEKRANFMEELTQELEATKQRNLVMRDQIKQLNVLARQHRNEVMES).

The protein belongs to the SPC25 family. As to quaternary structure, component of the Ndc80 complex, which is composed of Ndc80, Nuf2 and Spc25.

The protein resides in the nucleus. It localises to the chromosome. The protein localises to the centromere. It is found in the kinetochore. Functionally, acts as a component of the essential kinetochore-associated Ndc80 complex, which is required for chromosome segregation and spindle checkpoint activity during meiosis and mitosis. Required for kinetochore integrity and the organization of stable microtubule binding sites in the outer plate of the kinetochore. Participates in SAC signaling that responds specifically to disruptions in spindle microtubule dynamics. The NDC80 complex synergistically enhances the affinity of the SKA1 complex for microtubules and may allow the NDC80 complex to track depolymerizing microtubules. This is Kinetochore protein Spc25 from Drosophila lutescens (Fruit fly).